Reading from the N-terminus, the 366-residue chain is Chorismate synthase (366 aa).

2 residues coordinate NADP(+): arginine 48 and arginine 54. Residues 125-127 (RSS), 238-239 (NA), glycine 278, 293-297 (KPTSS), and arginine 319 each bind FMN.

Belongs to the chorismate synthase family. In terms of assembly, homotetramer. FMNH2 serves as cofactor.

It carries out the reaction 5-O-(1-carboxyvinyl)-3-phosphoshikimate = chorismate + phosphate. The protein operates within metabolic intermediate biosynthesis; chorismate biosynthesis; chorismate from D-erythrose 4-phosphate and phosphoenolpyruvate: step 7/7. Catalyzes the anti-1,4-elimination of the C-3 phosphate and the C-6 proR hydrogen from 5-enolpyruvylshikimate-3-phosphate (EPSP) to yield chorismate, which is the branch point compound that serves as the starting substrate for the three terminal pathways of aromatic amino acid biosynthesis. This reaction introduces a second double bond into the aromatic ring system. This chain is Chorismate synthase, found in Burkholderia multivorans (strain ATCC 17616 / 249).